The sequence spans 247 residues: Ubiquinone biosynthesis O-methyltransferase (247 aa).

Positions 41, 72, 93, and 136 each coordinate S-adenosyl-L-methionine.

The protein belongs to the methyltransferase superfamily. UbiG/COQ3 family.

The enzyme catalyses a 3-demethylubiquinol + S-adenosyl-L-methionine = a ubiquinol + S-adenosyl-L-homocysteine + H(+). It carries out the reaction a 3-(all-trans-polyprenyl)benzene-1,2-diol + S-adenosyl-L-methionine = a 2-methoxy-6-(all-trans-polyprenyl)phenol + S-adenosyl-L-homocysteine + H(+). The protein operates within cofactor biosynthesis; ubiquinone biosynthesis. O-methyltransferase that catalyzes the 2 O-methylation steps in the ubiquinone biosynthetic pathway. This Bartonella tribocorum (strain CIP 105476 / IBS 506) protein is Ubiquinone biosynthesis O-methyltransferase.